The primary structure comprises 594 residues: Arginine--tRNA ligase (594 aa).

Positions 139–149 match the 'HIGH' region motif; sequence ANPTGPLHVGH.

This sequence belongs to the class-I aminoacyl-tRNA synthetase family. In terms of assembly, monomer.

Its subcellular location is the cytoplasm. The enzyme catalyses tRNA(Arg) + L-arginine + ATP = L-arginyl-tRNA(Arg) + AMP + diphosphate. The polypeptide is Arginine--tRNA ligase (Burkholderia thailandensis (strain ATCC 700388 / DSM 13276 / CCUG 48851 / CIP 106301 / E264)).